The primary structure comprises 234 residues: Large ribosomal subunit protein uL1 (234 aa).

The protein belongs to the universal ribosomal protein uL1 family. Part of the 50S ribosomal subunit.

Binds directly to 23S rRNA. The L1 stalk is quite mobile in the ribosome, and is involved in E site tRNA release. Functionally, protein L1 is also a translational repressor protein, it controls the translation of the L11 operon by binding to its mRNA. In Edwardsiella ictaluri (strain 93-146), this protein is Large ribosomal subunit protein uL1.